Consider the following 228-residue polypeptide: Ribosomal RNA small subunit methyltransferase G (228 aa).

S-adenosyl-L-methionine is bound by residues Gly89, Leu94, Val140–Glu141, and Arg159.

Belongs to the methyltransferase superfamily. RNA methyltransferase RsmG family.

Its subcellular location is the cytoplasm. It catalyses the reaction guanosine(527) in 16S rRNA + S-adenosyl-L-methionine = N(7)-methylguanosine(527) in 16S rRNA + S-adenosyl-L-homocysteine. Specifically methylates the N7 position of guanine in position 527 of 16S rRNA. The protein is Ribosomal RNA small subunit methyltransferase G of Burkholderia cenocepacia (strain HI2424).